A 320-amino-acid chain; its full sequence is ATP synthase gamma chain (320 aa).

This sequence belongs to the ATPase gamma chain family. In terms of assembly, F-type ATPases have 2 components, CF(1) - the catalytic core - and CF(0) - the membrane proton channel. CF(1) has five subunits: alpha(3), beta(3), gamma(1), delta(1), epsilon(1). CF(0) has three main subunits: a, b and c.

The protein resides in the cell membrane. Produces ATP from ADP in the presence of a proton gradient across the membrane. The gamma chain is believed to be important in regulating ATPase activity and the flow of protons through the CF(0) complex. This is ATP synthase gamma chain from Lactobacillus helveticus (strain DPC 4571).